Reading from the N-terminus, the 20-residue chain is Brevinin-1T (20 aa).

A disulfide bond links C14 and C20.

This sequence belongs to the frog skin active peptide (FSAP) family. Brevinin subfamily. As to expression, expressed by the skin glands.

The protein resides in the secreted. Its function is as follows. Antibacterial activity against representative Gram-negative and Gram-positive bacteria and exhibits a very high hemolytic activity. The polypeptide is Brevinin-1T (Rana temporaria (European common frog)).